Here is a 603-residue protein sequence, read N- to C-terminus: UvrABC system protein C (603 aa).

Residues 13-92 (SSPGVYLMKD…IKQHHPKYNV (80 aa)) form the GIY-YIG domain. Positions 205–240 (EEVVKDLEKVIQKASDNLEFEQAANYYRTLSLIKQA) constitute a UVR domain.

This sequence belongs to the UvrC family. As to quaternary structure, interacts with UvrB in an incision complex.

The protein localises to the cytoplasm. Its function is as follows. The UvrABC repair system catalyzes the recognition and processing of DNA lesions. UvrC both incises the 5' and 3' sides of the lesion. The N-terminal half is responsible for the 3' incision and the C-terminal half is responsible for the 5' incision. This chain is UvrABC system protein C, found in Chlamydia pneumoniae (Chlamydophila pneumoniae).